The primary structure comprises 212 residues: Thiamine-phosphate synthase (212 aa).

4-amino-2-methyl-5-(diphosphooxymethyl)pyrimidine contacts are provided by residues 40–44 (QFREK) and N75. Mg(2+)-binding residues include D76 and D95. S113 contacts 4-amino-2-methyl-5-(diphosphooxymethyl)pyrimidine. 2-[(2R,5Z)-2-carboxy-4-methylthiazol-5(2H)-ylidene]ethyl phosphate is bound at residue 139 to 141 (TIS). 4-amino-2-methyl-5-(diphosphooxymethyl)pyrimidine is bound at residue K142. 2-[(2R,5Z)-2-carboxy-4-methylthiazol-5(2H)-ylidene]ethyl phosphate-binding positions include G171 and 191–192 (IS).

This sequence belongs to the thiamine-phosphate synthase family. It depends on Mg(2+) as a cofactor.

The catalysed reaction is 2-[(2R,5Z)-2-carboxy-4-methylthiazol-5(2H)-ylidene]ethyl phosphate + 4-amino-2-methyl-5-(diphosphooxymethyl)pyrimidine + 2 H(+) = thiamine phosphate + CO2 + diphosphate. The enzyme catalyses 2-(2-carboxy-4-methylthiazol-5-yl)ethyl phosphate + 4-amino-2-methyl-5-(diphosphooxymethyl)pyrimidine + 2 H(+) = thiamine phosphate + CO2 + diphosphate. It catalyses the reaction 4-methyl-5-(2-phosphooxyethyl)-thiazole + 4-amino-2-methyl-5-(diphosphooxymethyl)pyrimidine + H(+) = thiamine phosphate + diphosphate. Its pathway is cofactor biosynthesis; thiamine diphosphate biosynthesis; thiamine phosphate from 4-amino-2-methyl-5-diphosphomethylpyrimidine and 4-methyl-5-(2-phosphoethyl)-thiazole: step 1/1. Condenses 4-methyl-5-(beta-hydroxyethyl)thiazole monophosphate (THZ-P) and 2-methyl-4-amino-5-hydroxymethyl pyrimidine pyrophosphate (HMP-PP) to form thiamine monophosphate (TMP). This chain is Thiamine-phosphate synthase, found in Staphylococcus haemolyticus (strain JCSC1435).